Reading from the N-terminus, the 381-residue chain is Guanine nucleotide-binding protein subunit alpha-12 (381 aa).

C11 carries the S-palmitoyl cysteine lipid modification. One can recognise a G-alpha domain in the interval 56 to 381 (RLVKILLLGA…QENLKDIMLQ (326 aa)). The segment at 59 to 72 (KILLLGAGESGKST) is G1 motif. GTP-binding positions include 67–72 (ESGKST) and 202–205 (LLAR). Residue S71 participates in Mg(2+) binding. The tract at residues 200–208 (DILLARKAT) is G2 motif. T208 is a binding site for Mg(2+). Phosphothreonine is present on T208. The G3 motif stretch occupies residues 223–232 (FKMVDVGGQR). Positions 292-299 (ILFLNKMD) are G4 motif. GTP contacts are provided by residues 296-299 (NKMD) and A353. The G5 motif stretch occupies residues 351-356 (TTAIDT).

It belongs to the G-alpha family. G(12) subfamily. G proteins are composed of 3 units; alpha, beta and gamma. The alpha chain contains the guanine nucleotide binding site. Interacts with UBXD5. Interacts (in GTP-bound form) with PPP5C (via TPR repeats); activates PPP5C phosphatase activity and translocates PPP5C to the cell membrane. Interacts with RGS22. Interacts (via N-terminus) with NAPA; the interaction promotes CDH5 localization to plasma membrane. Interacts with CTNND1 (via N-terminus); the interaction regulates CDH1-mediated cell-cell adhesion. Interacts with PPP2R1A; the interaction promotes protein phosphatase 2A activation causing dephosphorylation of MAPT. Interacts (in GTP-bound form) with ARHGEF1. Interacts (in GTP-bound form) with ARHGEF11 (via RGS domain). Interacts (in GTP-bound form) with ARHGEF12 (via RGS domain).

Its subcellular location is the cell membrane. It localises to the lateral cell membrane. It is found in the cytoplasm. Functionally, guanine nucleotide-binding proteins (G proteins) are involved as modulators or transducers in various transmembrane signaling systems. Activates effector molecule RhoA by binding and activating RhoGEFs (ARHGEF12/LARG). GNA12-dependent Rho signaling subsequently regulates transcription factor AP-1 (activating protein-1). GNA12-dependent Rho signaling also regulates protein phosphatese 2A activation causing dephosphorylation of its target proteins. Promotes tumor cell invasion and metastasis by activating RhoA/ROCK signaling pathway and up-regulating pro-inflammatory cytokine production. Inhibits CDH1-mediated cell adhesion in process independent from Rho activation. Together with NAPA promotes CDH5 localization to plasma membrane. May play a role in the control of cell migration through the TOR signaling cascade. The protein is Guanine nucleotide-binding protein subunit alpha-12 (GNA12) of Homo sapiens (Human).